The primary structure comprises 434 residues: GPI-anchor transamidase component PIGU (434 aa).

Topologically, residues 1–3 (MAA) are cytoplasmic. A helical membrane pass occupies residues 4–22 (PLALVLVVAVTVRAALFRS). Residues 23 to 78 (SLAEFISERVEVVSPLSSWKRVVEGLALLDLGVSPYSGAVFHETPLIIYLFHFLID) are Lumenal-facing. The chain crosses the membrane as a helical span at residues 79 to 99 (YAELVFMITDALTAIALYFAI). Residues 100 to 136 (QDFNKVVFKKQKLLLELDQYAPDVAELIRTPMEMRYI) are Cytoplasmic-facing. 4 consecutive transmembrane segments (helical) span residues 137–157 (PLKVALYLLNPYTILSCVAKS), 158–177 (TCAINNTLIAFFILTTIKGS), 178–193 (VFLSAVFLALATYQSL), and 194–204 (YPVTLFAPGLL). At 205–221 (YLLQRQYIPVKVKSKAF) the chain is on the cytoplasmic side. Residue Lys-215 participates in a cardiolipin binding. The helical transmembrane segment at 222 to 243 (WIFSWEYAMMYTGSLVVIVCLS) threads the bilayer. Over 244–285 (FFLLSSWDFIPAVYGFILSVPDLTPNIGLFWYFFAEMFEHFS) the chain is Lumenal. The chain crosses the membrane as a helical span at residues 286–305 (LFFVCVFQINVFFYTVPLAI). The Cytoplasmic segment spans residues 306 to 310 (KLKEH). Lys-308 serves as a coordination point for a cardiolipin. 2 helical membrane-spanning segments follow: residues 311 to 330 (PIFFMFIQIAIISIFKSYPT) and 331 to 344 (VGDVALYMAFFPVW). Residues 345–353 (NHLYRFLRN) are Cytoplasmic-facing. A helical membrane pass occupies residues 354-371 (IFVLTCIIIVCSLLFPVL). Residues 372-383 (WHLWIYAGSANS) are Lumenal-facing. The a 2-acyl-6-[6-phosphoethanolamine-alpha-D-mannosyl-(1-&gt;2)-6-phosphoethanolamine-alpha-D-mannosyl-(1-&gt;6)-2-phosphoethanolamine-alpha-D-mannosyl-(1-&gt;4)-alpha-D-glucosaminyl]-1-(1-radyl,2-acyl-sn-glycero-3-phospho)-1D-myo-inositol site is built by Asn-382 and Asn-384. The chain crosses the membrane as a helical span at residues 384-405 (NFFYAITLTFNVGQILLISDYF). The Cytoplasmic segment spans residues 406 to 434 (YAFLRREYYLTHGLYLTAKDGTEAMLVLK).

It belongs to the PIGU family. As to quaternary structure, heteropentamer. Part of the GPI-anchor transamidase complex, consisting of PIGK, PIGT, PIGS, PIGU and GAA1.

The protein resides in the endoplasmic reticulum membrane. It functions in the pathway glycolipid biosynthesis; glycosylphosphatidylinositol-anchor biosynthesis. Functionally, component of the glycosylphosphatidylinositol-anchor (GPI-anchor) transamidase (GPI-T) complex that catalyzes the formation of the linkage between a proprotein and a GPI-anchor and participates in GPI anchored protein biosynthesis. Binds the lipid portion of GPI-anchor. May act as an organizer in the transmembrane layer to recruit other subunits, and thus is essential for assembly of the complex. This Mus musculus (Mouse) protein is GPI-anchor transamidase component PIGU.